We begin with the raw amino-acid sequence, 100 residues long: Small ribosomal subunit protein uS14c (100 aa).

This sequence belongs to the universal ribosomal protein uS14 family. Part of the 30S ribosomal subunit.

Its subcellular location is the plastid. It is found in the chloroplast. Binds 16S rRNA, required for the assembly of 30S particles. This is Small ribosomal subunit protein uS14c from Crucihimalaya wallichii (Rock-cress).